A 277-amino-acid polypeptide reads, in one-letter code: Hydroxyethylthiazole kinase (277 aa).

Met56 lines the substrate pocket. ATP-binding residues include Arg131 and Thr177. Ala204 serves as a coordination point for substrate.

The protein belongs to the Thz kinase family. Mg(2+) is required as a cofactor.

It catalyses the reaction 5-(2-hydroxyethyl)-4-methylthiazole + ATP = 4-methyl-5-(2-phosphooxyethyl)-thiazole + ADP + H(+). The protein operates within cofactor biosynthesis; thiamine diphosphate biosynthesis; 4-methyl-5-(2-phosphoethyl)-thiazole from 5-(2-hydroxyethyl)-4-methylthiazole: step 1/1. Functionally, catalyzes the phosphorylation of the hydroxyl group of 4-methyl-5-beta-hydroxyethylthiazole (THZ). In Gemmatimonas aurantiaca (strain DSM 14586 / JCM 11422 / NBRC 100505 / T-27), this protein is Hydroxyethylthiazole kinase.